The following is a 290-amino-acid chain: ATP synthase gamma chain (290 aa).

The protein belongs to the ATPase gamma chain family. F-type ATPases have 2 components, CF(1) - the catalytic core - and CF(0) - the membrane proton channel. CF(1) has five subunits: alpha(3), beta(3), gamma(1), delta(1), epsilon(1). CF(0) has three main subunits: a, b and c.

It localises to the cell inner membrane. In terms of biological role, produces ATP from ADP in the presence of a proton gradient across the membrane. The gamma chain is believed to be important in regulating ATPase activity and the flow of protons through the CF(0) complex. The sequence is that of ATP synthase gamma chain from Chlorobium luteolum (strain DSM 273 / BCRC 81028 / 2530) (Pelodictyon luteolum).